Reading from the N-terminus, the 399-residue chain is Tryptophan synthase beta chain (399 aa).

K92 is subject to N6-(pyridoxal phosphate)lysine.

Belongs to the TrpB family. As to quaternary structure, tetramer of two alpha and two beta chains. Pyridoxal 5'-phosphate is required as a cofactor.

It catalyses the reaction (1S,2R)-1-C-(indol-3-yl)glycerol 3-phosphate + L-serine = D-glyceraldehyde 3-phosphate + L-tryptophan + H2O. It participates in amino-acid biosynthesis; L-tryptophan biosynthesis; L-tryptophan from chorismate: step 5/5. The beta subunit is responsible for the synthesis of L-tryptophan from indole and L-serine. This chain is Tryptophan synthase beta chain, found in Bordetella pertussis (strain Tohama I / ATCC BAA-589 / NCTC 13251).